The primary structure comprises 182 residues: ATP-dependent protease subunit HslV (182 aa).

Residue Thr12 is part of the active site. Positions 167, 170, and 173 each coordinate Na(+).

Belongs to the peptidase T1B family. HslV subfamily. In terms of assembly, a double ring-shaped homohexamer of HslV is capped on each side by a ring-shaped HslU homohexamer. The assembly of the HslU/HslV complex is dependent on binding of ATP.

It is found in the cytoplasm. It catalyses the reaction ATP-dependent cleavage of peptide bonds with broad specificity.. With respect to regulation, allosterically activated by HslU binding. Protease subunit of a proteasome-like degradation complex believed to be a general protein degrading machinery. The chain is ATP-dependent protease subunit HslV from Paramagnetospirillum magneticum (strain ATCC 700264 / AMB-1) (Magnetospirillum magneticum).